The following is a 162-amino-acid chain: MHYVTPDLCDAYPELVQVVEPMFSNFGGRDAFGGEIVTIKCFEDNSLVKEQVDKDGKGKVLVVDGGGSLRRALLGDMLAEKAAKNGWEGIVVYGCIRDVDVIAQTELGVQALASHPMKTDKRGIGDLNVVVTFGGVTFRPGEFVYADNNGIIVSPQALNMPG.

Substrate-binding positions include 75 to 78 (GDML) and arginine 97. Aspartate 98 is an a divalent metal cation binding site.

Belongs to the class II aldolase/RraA-like family. Homotrimer. A divalent metal cation is required as a cofactor.

It carries out the reaction 4-hydroxy-4-methyl-2-oxoglutarate = 2 pyruvate. It catalyses the reaction oxaloacetate + H(+) = pyruvate + CO2. Catalyzes the aldol cleavage of 4-hydroxy-4-methyl-2-oxoglutarate (HMG) into 2 molecules of pyruvate. Also contains a secondary oxaloacetate (OAA) decarboxylase activity due to the common pyruvate enolate transition state formed following C-C bond cleavage in the retro-aldol and decarboxylation reactions. This Pseudomonas paraeruginosa (strain DSM 24068 / PA7) (Pseudomonas aeruginosa (strain PA7)) protein is Putative 4-hydroxy-4-methyl-2-oxoglutarate aldolase.